A 205-amino-acid chain; its full sequence is Anaerobic dimethyl sulfoxide reductase chain B (205 aa).

4Fe-4S ferredoxin-type domains are found at residues 5–33 (YGFF…LTPE), 59–89 (FAYY…KRED), and 90–119 (GFVV…YNET). Positions 14, 17, 20, 24, 67, 70, 75, 79, 99, 102, 105, 109, 126, 129, 141, and 145 each coordinate [4Fe-4S] cluster. A disordered region spans residues 184–205 (KPNANSRPTGDTTGYLANPKEV). Residues 186–195 (NANSRPTGDT) show a composition bias toward polar residues.

Heterotrimeric enzyme composed of a catalytic heterodimer (DmsAB) and a membrane anchor protein (DmsC). Requires [4Fe-4S] cluster as cofactor.

Electron transfer subunit of the terminal reductase during anaerobic growth on various sulfoxide and N-oxide compounds. In Escherichia coli (strain K12), this protein is Anaerobic dimethyl sulfoxide reductase chain B (dmsB).